The sequence spans 185 residues: ATP synthase subunit delta (185 aa).

This sequence belongs to the ATPase delta chain family. In terms of assembly, F-type ATPases have 2 components, F(1) - the catalytic core - and F(0) - the membrane proton channel. F(1) has five subunits: alpha(3), beta(3), gamma(1), delta(1), epsilon(1). CF(0) has four main subunits: a(1), b(1), b'(1) and c(10-14). The alpha and beta chains form an alternating ring which encloses part of the gamma chain. F(1) is attached to F(0) by a central stalk formed by the gamma and epsilon chains, while a peripheral stalk is formed by the delta, b and b' chains.

Its subcellular location is the cellular thylakoid membrane. Its function is as follows. F(1)F(0) ATP synthase produces ATP from ADP in the presence of a proton or sodium gradient. F-type ATPases consist of two structural domains, F(1) containing the extramembraneous catalytic core and F(0) containing the membrane proton channel, linked together by a central stalk and a peripheral stalk. During catalysis, ATP synthesis in the catalytic domain of F(1) is coupled via a rotary mechanism of the central stalk subunits to proton translocation. This protein is part of the stalk that links CF(0) to CF(1). It either transmits conformational changes from CF(0) to CF(1) or is implicated in proton conduction. This is ATP synthase subunit delta from Cyanothece sp. (strain PCC 7425 / ATCC 29141).